The following is a 100-amino-acid chain: Large ribosomal subunit protein uL23 (100 aa).

The protein belongs to the universal ribosomal protein uL23 family. Part of the 50S ribosomal subunit. Contacts protein L29, and trigger factor when it is bound to the ribosome.

Functionally, one of the early assembly proteins it binds 23S rRNA. One of the proteins that surrounds the polypeptide exit tunnel on the outside of the ribosome. Forms the main docking site for trigger factor binding to the ribosome. The sequence is that of Large ribosomal subunit protein uL23 from Mycobacterium marinum (strain ATCC BAA-535 / M).